Here is a 398-residue protein sequence, read N- to C-terminus: S-adenosylmethionine synthase 2 (398 aa).

His16 provides a ligand contact to ATP. A Mg(2+)-binding site is contributed by Asp18. Glu51 contacts K(+). Glu64 and Gln108 together coordinate L-methionine. Positions 108 to 118 (QSADIAQGVDA) are flexible loop. Residues 176 to 178 (DSK), 242 to 243 (KF), Asp251, 257 to 258 (RK), Ala274, and Lys278 contribute to the ATP site. Asp251 contributes to the L-methionine binding site. Residue Lys282 participates in L-methionine binding.

The protein belongs to the AdoMet synthase family. As to quaternary structure, homotetramer; dimer of dimers. The cofactor is Mg(2+). Requires K(+) as cofactor.

The protein resides in the cytoplasm. The enzyme catalyses L-methionine + ATP + H2O = S-adenosyl-L-methionine + phosphate + diphosphate. It participates in amino-acid biosynthesis; S-adenosyl-L-methionine biosynthesis; S-adenosyl-L-methionine from L-methionine: step 1/1. Catalyzes the formation of S-adenosylmethionine (AdoMet) from methionine and ATP. The overall synthetic reaction is composed of two sequential steps, AdoMet formation and the subsequent tripolyphosphate hydrolysis which occurs prior to release of AdoMet from the enzyme. This Rhodopseudomonas palustris (strain BisB18) protein is S-adenosylmethionine synthase 2.